Here is a 291-residue protein sequence, read N- to C-terminus: Beta-lactamase CTX-M-8 (291 aa).

An N-terminal signal peptide occupies residues 1–30 (MMRHRVKRMMLMTTACISLLLGSAPLYAQA). The active-site Nucleophile; acyl-ester intermediate is the S73. 4 residues coordinate a beta-lactam: K76, S133, E169, and S240.

It belongs to the class-A beta-lactamase family. As to quaternary structure, monomer.

The protein resides in the secreted. The enzyme catalyses a beta-lactam + H2O = a substituted beta-amino acid. Its activity is regulated as follows. Inhibited by the beta-lactamase-blocking agents clavulanic acid, tazobactam and sulbactam; in the DH5alpha strain of E.coli. Extended-spectrum beta-lactamase (ESBL) which confers resistance to penicillins, as well as first, third and fourth-generation cephalosporins. Has cefotaxime-hydrolyzing activity. Inactive against cephalosporin antibiotic, cefoxitin, and the carbapenem, imipenem. The protein is Beta-lactamase CTX-M-8 of Citrobacter amalonaticus.